We begin with the raw amino-acid sequence, 917 residues long: MRLSSSSGSVLPAQAASPEAVEEQKCLNSELWHACAGPLVSLPAVGSRVVYFPQGHSEQVAASTNKEMESQIPNYPNLPPQLICQLHNVTMHADAETDEVYAQMTLQPLSPQELKDPYLPAELGSANKQPTNYFCKTLTASDTSTHGGFSVPRRAAEKVFPPLDFTQQPPAQELIAKDLHGNEWKFRHIFRGQPKRHLLTTGWSVFVSAKRLVAGDSVLFIWNDNNQLLLGIRRANRPQTVMPSSVLSSDSMHIGLLAAAAHAASTNSRFTIFYNPRASPSEFVIPLSKYVKAVYHTRISVGMRFRMLFETEESSVRRYMGTITGISDLDAARWPNSHWRSVKVGWDESTAGERQPRVSLWEIEPLTTFPMYPSPFPLRLKRPWPTGLPSLHGGKDDDLTSSLMWLRDSANPGFQSLNFGGLGMNPWMQPRFDASLLGLQPDMYQTIAATAFQDPTKQVSPTILQFQQPQNIGGRANTLLPSQILQQVQPQFQQQQYLQNINETTIQGHAQSEFLQQQLQRCQSFTEQKPQLQTQQQQQESQQQQQQQSQCMQVPQHQQMQQQKNMTNYQSVPNALSPFSQLSSPSQSSPMTLQTVLPFSQPQSYPDTSMSSLSPSNTSTMHNALRPFSSEAPSHLSMPRPTAVPVPDPWSSKRVAVESLLPSRPQVTSQMEQLDSTAPSIPQSSALAPLPGRGCLVDQDGNSDPQNHLLFGVNIDSQSLLMQGGIPSLQGENDSTAIPYSTSNFLSPLQNDFPLDQTLSSADCLDESGYVPCSQNSDQVINRPPATFVKVYKSGTYGRSLDITRFSSYHELRRELGRLFGLEGQLENPLRSGWQLVFVDREDDVLLVGDDPWQEFVNSVSCIKILSPQEVQQMGKPFELLSSAPGKRLGSSCDDYVSRQESRSLSTGIASVGSVEF.

The segment at residues 134 to 236 (FCKTLTASDT…QLLLGIRRAN (103 aa)) is a DNA-binding region (TF-B3). The disordered stretch occupies residues 571-649 (SVPNALSPFS…RPTAVPVPDP (79 aa)). Low complexity-rich tracts occupy residues 576 to 594 (LSPF…MTLQ) and 604 to 620 (SYPD…NTST). In terms of domain architecture, PB1 spans 786–870 (ATFVKVYKSG…SCIKILSPQE (85 aa)).

It belongs to the ARF family. Homodimers and heterodimers.

Its subcellular location is the nucleus. Functionally, auxin response factors (ARFs) are transcriptional factors that bind specifically to the DNA sequence 5'-TGTCTC-3' found in the auxin-responsive promoter elements (AuxREs). This is Auxin response factor 17 (ARF17) from Oryza sativa subsp. indica (Rice).